Here is a 563-residue protein sequence, read N- to C-terminus: MSEQKLALNEYLKIDSDYLRGDIQEGLDTQVTGSFSDGDQQLIKFHGFYQQDDRDLRNERKEQKLEPLHSFMLRARVPGGICTPAQWLEVDKISSTLTTSNSIRLTTRQTFQYHGIPKRNLKTLIQGLDRAALDSIAACGDVNRNVMCNPNPVESKLHAQAYAVAKHLSDHLLPHTRAYAEIWLDEEKLLGTETVEPVYGKTYLPRKFKMAVAVPPHNDVDVYTNDLGFIAVSEAGELIGFNLVAGGGMGSTHGEVETFPRLADDFGFIKTDDVTKFAEAVMTVQRDWGNRVVRKRARLKYTIVDHGYDAFKAEVEKRAGVKFEPKRDVIIGDRGDRYGWVEGIDNKFHLTLFIESGRIKDMPGQTLQTGLREIAKIHKGDFRMTSNQNMIIAGVAAQDKAEIEGLARKHGLLGQVLSGTRGHSIACVALPTCPLAMAEAERYFPEFIDHIDALQAKHGISEQSIVVRMTGCPNGCARPFAAEIGLVGKAPGRYNLYLGASFEGTRLNKMHKENIQEAEILAELDTLFGRYATERDAGETFGNFTVRIGVVKAVNDAAKDFHA.

Positions 427, 433, 472, and 476 each coordinate [4Fe-4S] cluster. Cys-476 provides a ligand contact to siroheme.

The protein belongs to the nitrite and sulfite reductase 4Fe-4S domain family. As to quaternary structure, alpha(8)-beta(8). The alpha component is a flavoprotein, the beta component is a hemoprotein. It depends on siroheme as a cofactor. Requires [4Fe-4S] cluster as cofactor.

The enzyme catalyses hydrogen sulfide + 3 NADP(+) + 3 H2O = sulfite + 3 NADPH + 4 H(+). It participates in sulfur metabolism; hydrogen sulfide biosynthesis; hydrogen sulfide from sulfite (NADPH route): step 1/1. Its function is as follows. Component of the sulfite reductase complex that catalyzes the 6-electron reduction of sulfite to sulfide. This is one of several activities required for the biosynthesis of L-cysteine from sulfate. This is Sulfite reductase [NADPH] hemoprotein beta-component from Shewanella frigidimarina (strain NCIMB 400).